We begin with the raw amino-acid sequence, 303 residues long: Growth/differentiation factor 15 (303 aa).

An N-terminal signal peptide occupies residues 1–30 (MAPPALQAQPPGGSQLRFLLFLLLLLLLLS). The propeptide occupies 31–188 (WPSQGDALAM…LRVAAGRGRR (158 aa)). A glycan (N-linked (GlcNAc...) asparagine) is linked at N71. Intrachain disulfides connect C198-C205, C206-C269, C235-C300, and C239-C302.

The protein belongs to the TGF-beta family. As to quaternary structure, homodimer; disulfide-linked. Interacts with GFRAL and RET; ligand of GFRAL, which mediates GDF15 internalization and cellular signaling through interaction with RET via the formation of a 2:2:2 ternary complex composed of GDF15, GFRAL and RET. In terms of tissue distribution, detected in plasma (at protein level). Highly expressed in liver. Expressed in the distal small intestine, colon and kidney. Expressed in skeletal muscle in response to mitochondrial stress. Expressed by cardiomyocytes, expression is highly increased in heart diseases. Also detected in subcutaneous fat.

It localises to the secreted. In terms of biological role, hormone produced in response to various stresses to confer information about those stresses to the brain, and trigger an aversive response, characterized by nausea and/or loss of appetite. The aversive response is both required to reduce continuing exposure to those stresses at the time of exposure and to promote avoidance behavior in the future. Acts by binding to its receptor, GFRAL, activating GFRAL-expressing neurons localized in the area postrema and nucleus tractus solitarius of the brainstem. It then triggers the activation of neurons localized within the parabrachial nucleus and central amygdala, which constitutes part of the 'emergency circuit' that shapes responses to stressful conditions. The GDF15-GFRAL signal induces expression of genes involved in metabolism, such as lipid metabolism in adipose tissues. Required for avoidance behavior in response to food allergens: induced downstream of mast cell activation to promote aversion and minimize harmful effects of exposure to noxious substances. In addition to suppress appetite, also promotes weight loss by enhancing energy expenditure in muscle: acts by increasing calcium futile cycling in muscle. Contributes to the effect of metformin, an anti-diabetic drug, on appetite reduction and weight loss: produced in the kidney in response to metformin treatment, thereby activating the GDF15-GFRAL response, leading to reduced appetite and weight. Produced in response to anticancer drugs, such as camptothecin or cisplatin, promoting nausea and contributing to malnutrition. Overproduced in many cancers, promoting anorexia in cancer (cachexia). Responsible for the risk of nausea during pregnancy: high levels of GDF15 during pregnancy, mostly originating from embryos, are associated with increased nausea. Maternal sensitivity to nausea is probably determined by pre-pregnancy exposure to GDF15, females with naturally high level of GDF15 being less susceptible to nausea than female mice with low levels of GDF15 before pregnancy. Promotes metabolic adaptation in response to systemic inflammation caused by bacterial and viral infections in order to promote tissue tolerance and prevent tissue damage. Required for tissue tolerance in response to myocardial infarction by acting as an inhibitor of leukocyte integring activation, thereby protecting against cardiac rupture. Inhibits growth hormone signaling on hepatocytes. The protein is Growth/differentiation factor 15 of Mus musculus (Mouse).